The sequence spans 851 residues: Protein translocase subunit SecA (851 aa).

Residues glutamine 88, 106–110, and aspartate 496 each bind ATP; that span reads GEGKT. Zn(2+) contacts are provided by cysteine 828, cysteine 830, cysteine 839, and histidine 840.

This sequence belongs to the SecA family. In terms of assembly, monomer and homodimer. Part of the essential Sec protein translocation apparatus which comprises SecA, SecYEG and auxiliary proteins SecDF-YajC and YidC. It depends on Zn(2+) as a cofactor.

The protein localises to the cell inner membrane. The protein resides in the cytoplasm. It carries out the reaction ATP + H2O + cellular proteinSide 1 = ADP + phosphate + cellular proteinSide 2.. Part of the Sec protein translocase complex. Interacts with the SecYEG preprotein conducting channel. Has a central role in coupling the hydrolysis of ATP to the transfer of proteins into and across the cell membrane, serving as an ATP-driven molecular motor driving the stepwise translocation of polypeptide chains across the membrane. The polypeptide is Protein translocase subunit SecA (Helicobacter hepaticus (strain ATCC 51449 / 3B1)).